A 1009-amino-acid polypeptide reads, in one-letter code: Type VII secretion system accessory factor EsaA (1009 aa).

A run of 6 helical transmembrane segments spans residues 7–27 (IYAL…IFFV), 822–842 (ISPT…AYIF), 869–889 (VITS…VGLI), 903–923 (KFIL…TYLL), 928–948 (SIGM…MNNL), and 979–999 (IGLA…LNMF).

Belongs to the EsaA family. In terms of assembly, homodimer. Interacts with EssB.

The protein resides in the cell membrane. Functionally, component of the type VII secretion system (Ess). Provides together with EssB and other components such as EssC and EssE a secretion platform across the cytoplasmic membrane in the host. This Staphylococcus aureus (strain MSSA476) protein is Type VII secretion system accessory factor EsaA.